Consider the following 308-residue polypeptide: 34.2 kDa protein in rubredoxin operon (308 aa).

Cysteines 136 and 139 form a disulfide. 268 to 278 lines the FAD pocket; the sequence is TNIKGVFAAGD.

The protein belongs to the class-II pyridine nucleotide-disulfide oxidoreductase family.

The polypeptide is 34.2 kDa protein in rubredoxin operon (Clostridium pasteurianum).